A 99-amino-acid polypeptide reads, in one-letter code: Progonadoliberin-1 (99 aa).

An N-terminal signal peptide occupies residues 1-26 (MAAQTFALRLLLVGTLLGTLLGQGCC). Gln27 is modified (pyrrolidone carboxylic acid). Gly36 carries the post-translational modification Glycine amide.

It belongs to the GnRH family.

The protein localises to the secreted. Functionally, stimulates the secretion of gonadotropins. The sequence is that of Progonadoliberin-1 (gnrh1) from Dicentrarchus labrax (European seabass).